We begin with the raw amino-acid sequence, 473 residues long: DNA-binding protein (473 aa).

Disordered regions lie at residues 1 to 69 (MAGR…GFSH) and 85 to 111 (RRLE…SKAV). Polar residues predominate over residues 7 to 18 (ELPTITPYLQET). Positions 53–62 (PDSEEEEEEV) are enriched in acidic residues. Y141 carries the phosphotyrosine; by host modification. Zn(2+) contacts are provided by C230 and H232. The flexible loop stretch occupies residues 243–277 (VEMDVASENAQRALKEHPSRAKVVQNRWGRSVVQL). Zn(2+)-binding residues include C285, C301, C342, C344, C396, and C412. The segment at 459-473 (VALPASHGDGEKEPF) is C-terminal arm, DBP binding.

This sequence belongs to the adenoviridae E2A DNA-binding protein family. Homomultimerizes on viral ssDNA bound to pTP. Forms a initiation complex with viral polymerase, pTP and hosts NFIA and POU2F1/OCT1. Interacts with host SRCAP.

Its subcellular location is the host nucleus. In terms of biological role, plays a role in the elongation phase of viral strand displacement replication by unwinding the template in an ATP-independent fashion, employing its capacity to form multimers. Also enhances the rate of initiation. Released from template upon second strand synthesis. Assembles in complex with viral pTP, viral pol, host NFIA and host POU2F1/OCT1 on viral origin of replication. Covers the whole ssDNA genome during synthesis. The complementary strand synthesis induces its relese from DNA template. May inhibit cellular transcription mediated by the interaction between host SRCAP and CBP. The protein is DNA-binding protein of Homo sapiens (Human).